The following is a 206-amino-acid chain: Large ribosomal subunit protein uL4 (206 aa).

The protein belongs to the universal ribosomal protein uL4 family. As to quaternary structure, part of the 50S ribosomal subunit.

Functionally, one of the primary rRNA binding proteins, this protein initially binds near the 5'-end of the 23S rRNA. It is important during the early stages of 50S assembly. It makes multiple contacts with different domains of the 23S rRNA in the assembled 50S subunit and ribosome. In terms of biological role, forms part of the polypeptide exit tunnel. The chain is Large ribosomal subunit protein uL4 from Methylobacterium radiotolerans (strain ATCC 27329 / DSM 1819 / JCM 2831 / NBRC 15690 / NCIMB 10815 / 0-1).